Reading from the N-terminus, the 180-residue chain is Ribulose bisphosphate carboxylase small subunit, chloroplastic (180 aa).

A chloroplast-targeting transit peptide spans 1 to 56 (MASSVLSSAAVATRSNVAQANMVAPFTGLKSAASFPVSRKQNLDITSIASNGGRVQ).

This sequence belongs to the RuBisCO small chain family. Heterohexadecamer of 8 large and 8 small subunits. In terms of assembly, (Microbial infection) Binds to tobamovirus movement protein at the plasmodesmata (e.g. tomato mosaic virus MP AC P69513); this interaction seems required for viral systemic movement.

It is found in the plastid. It localises to the chloroplast. The protein localises to the cell junction. The protein resides in the plasmodesma. In terms of biological role, ruBisCO catalyzes two reactions: the carboxylation of D-ribulose 1,5-bisphosphate, the primary event in carbon dioxide fixation, as well as the oxidative fragmentation of the pentose substrate. Both reactions occur simultaneously and in competition at the same active site. Although the small subunit is not catalytic it is essential for maximal activity. Involved in antiviral defenses. Its function is as follows. (Microbial infection) Required for tobamovirus movement (e.g. tobacco mosaic virus (TMV)). This Nicotiana benthamiana protein is Ribulose bisphosphate carboxylase small subunit, chloroplastic.